The following is a 249-amino-acid chain: General transcription factor IIF subunit 2 (249 aa).

Residue Ala2 is modified to N-acetylalanine. N6-acetyllysine occurs at positions 22, 33, and 137. Ser142 is subject to Phosphoserine. Positions 227 and 229 each coordinate DNA. Ser248 bears the Phosphoserine mark.

Belongs to the TFIIF beta subunit family. In terms of assembly, heterodimer of an alpha and a beta subunit. Interacts with HTATSF1 and GPBP1. Interacts with URI1. Interacts with GTF2B (via N-terminus); this interaction is inhibited in presence of GTF2F1. Part of TBP-based Pol II pre-initiation complex (PIC), in which Pol II core assembles with general transcription factors and other specific initiation factors including GTF2E1, GTF2E2, GTF2F1, GTF2F2, TCEA1, ERCC2, ERCC3, GTF2H2, GTF2H3, GTF2H4, GTF2H5, GTF2A1, GTF2A2, GTF2B and TBP; this large multi-subunit PIC complex mediates DNA unwinding and targets Pol II core to the transcription start site where the first phosphodiester bond forms.

Its subcellular location is the nucleus. TFIIF is a general transcription initiation factor that binds to RNA polymerase II and helps to recruit it to the initiation complex in collaboration with TFIIB. It promotes transcription elongation. The chain is General transcription factor IIF subunit 2 (Gtf2f2) from Rattus norvegicus (Rat).